The following is a 32-amino-acid chain: Hyaluronidase-Pk1a (32 aa).

A glycan (N-linked (GlcNAc...) asparagine) is linked at Asn-23.

This sequence belongs to the glycosyl hydrolase 56 family. As to expression, expressed by the venom gland.

The protein localises to the secreted. It catalyses the reaction Random hydrolysis of (1-&gt;4)-linkages between N-acetyl-beta-D-glucosamine and D-glucuronate residues in hyaluronate.. Hydrolyzes high molecular weight hyaluronic acid to produce small oligosaccharides. The protein is Hyaluronidase-Pk1a of Phoneutria keyserlingi (Brazilian wandering spider).